We begin with the raw amino-acid sequence, 483 residues long: Regulatory protein ViaA (483 aa).

The protein belongs to the ViaA family. In terms of assembly, homodimer. Interacts with RavA.

It localises to the cytoplasm. Its function is as follows. Component of the RavA-ViaA chaperone complex, which may act on the membrane to optimize the function of some of the respiratory chains. ViaA stimulates the ATPase activity of RavA. This is Regulatory protein ViaA from Escherichia coli O7:K1 (strain IAI39 / ExPEC).